The chain runs to 26 residues: Alpha-amylase inhibitor 1 (26 aa).

The protein belongs to the protease inhibitor I6 (cereal trypsin/alpha-amylase inhibitor) family.

Its subcellular location is the secreted. Functionally, alpha-amylase inhibitor. The chain is Alpha-amylase inhibitor 1 from Saussurea costus (Costus).